Reading from the N-terminus, the 399-residue chain is S-adenosylmethionine synthase (399 aa).

His-15 provides a ligand contact to ATP. Residue Asp-17 coordinates Mg(2+). Glu-43 is a K(+) binding site. Glu-56 and Gln-99 together coordinate L-methionine. A flexible loop region spans residues Gln-99–Asn-109. Residues Asp-174 to Lys-176, Arg-244 to Phe-245, Asp-253, Arg-259 to Lys-260, Ala-276, and Lys-280 each bind ATP. Asp-253 is an L-methionine binding site. Residue Lys-284 coordinates L-methionine.

This sequence belongs to the AdoMet synthase family. Homotetramer; dimer of dimers. It depends on Mg(2+) as a cofactor. K(+) is required as a cofactor.

It localises to the cytoplasm. It carries out the reaction L-methionine + ATP + H2O = S-adenosyl-L-methionine + phosphate + diphosphate. The protein operates within amino-acid biosynthesis; S-adenosyl-L-methionine biosynthesis; S-adenosyl-L-methionine from L-methionine: step 1/1. Its function is as follows. Catalyzes the formation of S-adenosylmethionine (AdoMet) from methionine and ATP. The overall synthetic reaction is composed of two sequential steps, AdoMet formation and the subsequent tripolyphosphate hydrolysis which occurs prior to release of AdoMet from the enzyme. The protein is S-adenosylmethionine synthase of Salinispora arenicola (strain CNS-205).